The primary structure comprises 503 residues: Probable folate-biopterin transporter 6 (503 aa).

12 consecutive transmembrane segments (helical) span residues 56–76, 101–121, 128–148, 153–173, 194–214, 221–241, 281–301, 314–334, 344–364, 369–389, 404–424, and 450–470; these read SFVLGVVLVYGVNQGFSGSIF, LYYIPWVMRPIWGLFTDVFPI, PYFVVSGVLGLVSAIAIVVLG, ALALSCLLGVSAAMAIADVVI, LCMVCSSAGALVGYATSGVFV, GALGVLAFSPATIVILGFFIY, LYMFISLALNISTHEGHFYWY, FVGIIYAVGALASMFGVLIYH, NILFFAQLLYVFSGMLDLVFI, LTLGIPDSLFVITEESFTKMI, LCPLGIEGTFFAFLMCIDSFG, and WLVILIRNILRLVTVCFVFLV.

This sequence belongs to the major facilitator superfamily. Folate-biopterin transporter (TC 2.A.71) family.

It is found in the membrane. Could mediate folate transport. This chain is Probable folate-biopterin transporter 6, found in Arabidopsis thaliana (Mouse-ear cress).